Consider the following 1042-residue polypeptide: MENAHTKTVEEVLGHFGVNESTGLSLEQVKKLKERWGSNELPAEEGKTLLELVIEQFEDLLVRILLLAACISFVLAWFEEGEETITAFVEPFVILLILVANAIVGVWQERNAENAIEALKEYEPEMGKVYRQDRKSVQRIKAKDIVPGDIVEIAVGDKVPADIRLTSIKSTTLRVDQSILTGESVSVIKHTDPVPDPRAVNQDKKNMLFSGTNIAAGKAMGVVVATGVNTEIGKIRDEMVATEQERTPLQQKLDEFGEQLSKVISLICIAVWIINIGHFNDPVHGGSWIRGAIYYFKIAVALAVAAIPEGLPAVITTCLALGTRRMAKKNAIVRSLPSVETLGCTSVICSDKTGTLTTNQMSVCRMFILDKVDGDTCSLNEFTITGSTYAPIGEVHKDDKPVKCHQYDGLVELATICALCNDSALDYNEAKGVYEKVGEATETALTCLVEKMNVFDTELKGLSKIERANACNSVIKQLMKKEFTLEFSRDRKSMSVYCTPNKPSRTSMSKMFVKGAPEGVIDRCTHIRVGSTKVPMTAGVKQKIMSVIREWGSGSDTLRCLALATHDNPLRREEMHLKDSANFIKYETNLTFVGCVGMLDPPRIEVASSVKLCRQAGIRVIMITGDNKGTAVAICRRIGIFGQEEDVTAKAFTGREFDELNPSAQRDACLNARCFARVEPSHKSKIVEFLQSFDEITAMTGDGVNDAPALKKAEIGIAMGSGTAVAKTASEMVLADDNFSTIVAAVEEGRAIYNNMKQFIRYLISSNVGEVVCIFLTAALGFPEALIPVQLLWVNLVTDGLPATALGFNPPDLDIMNKPPRNPKEPLISGWLFFRYLAIGCYVGAATVGAAAWWFIAADGGPRVSFYQLSHFLQCKEDNPDFEGVDCAIFESPYPMTMALSVLVTIEMCNALNSLSENQSLLRMPPWENIWLVGSICLSMSLHFLILYVEPLPLIFQITPLNVTQWLMVLKISLPVILMDETLKFVARNYLEPGKECVQPAPQSCSLWACTEGVSWPFVLLIVPLVMWVYSTDTNFSDLLWS.

Residues 1–48 (MENAHTKTVEEVLGHFGVNESTGLSLEQVKKLKERWGSNELPAEEGKT) are Cytoplasmic-facing. Residue Ser-38 is modified to Phosphoserine. The helical transmembrane segment at 49-69 (LLELVIEQFEDLLVRILLLAA) threads the bilayer. The Lumenal segment spans residues 70 to 89 (CISFVLAWFEEGEETITAFV). Residues 90–110 (EPFVILLILVANAIVGVWQER) traverse the membrane as a helical segment. At 111–253 (NAENAIEALK…QERTPLQQKL (143 aa)) the chain is on the cytoplasmic side. Residues 254–273 (DEFGEQLSKVISLICIAVWI) form a helical membrane-spanning segment. Topologically, residues 274–295 (INIGHFNDPVHGGSWIRGAIYY) are lumenal. Tyr-294 and Tyr-295 each carry 3'-nitrotyrosine. A helical membrane pass occupies residues 296 to 313 (FKIAVALAVAAIPEGLPA). Ca(2+)-binding residues include Val-304, Ala-305, Ile-307, and Glu-309. Topologically, residues 314–756 (VITTCLALGT…EEGRAIYNNM (443 aa)) are cytoplasmic. Asp-351 acts as the 4-aspartylphosphate intermediate in catalysis. 2 residues coordinate Mg(2+): Asp-351 and Thr-353. Thr-353 is an ATP binding site. Residue Thr-441 is modified to Phosphothreonine. Residues Glu-442, Arg-489, and Lys-514 each coordinate ATP. Ser-531 is subject to Phosphoserine. Arg-559 is a binding site for ATP. The tract at residues 575 to 594 (MHLKDSANFIKYETNLTFVG) is interaction with HAX1. Ser-580 bears the Phosphoserine mark. 3 residues coordinate ATP: Thr-624, Gly-625, and Asp-626. Phosphoserine is present on Ser-663. 2 residues coordinate ATP: Arg-677 and Lys-683. Asp-702 contributes to the Mg(2+) binding site. Position 705 (Asn-705) interacts with ATP. A helical transmembrane segment spans residues 757 to 776 (KQFIRYLISSNVGEVVCIFL). The Ca(2+) site is built by Asn-767 and Glu-770. The Lumenal portion of the chain corresponds to 777-786 (TAALGFPEAL). A helical membrane pass occupies residues 787-807 (IPVQLLWVNLVTDGLPATALG). Positions 787–807 (IPVQLLWVNLVTDGLPATALG) are interaction with PLN. The interaction with TMEM64 and PDIA3 stretch occupies residues 788–1042 (PVQLLWVNLV…DTNFSDLLWS (255 aa)). Residues Asn-795, Thr-798, and Asp-799 each contribute to the Ca(2+) site. The Cytoplasmic portion of the chain corresponds to 808-827 (FNPPDLDIMNKPPRNPKEPL). The chain crosses the membrane as a helical span at residues 828-850 (ISGWLFFRYLAIGCYVGAATVGA). The Lumenal portion of the chain corresponds to 851 to 896 (AAWWFIAADGGPRVSFYQLSHFLQCKEDNPDFEGVDCAIFESPYPM). Cys-875 and Cys-887 are oxidised to a cystine. Residues 897-916 (TMALSVLVTIEMCNALNSLS) form a helical membrane-spanning segment. Glu-907 contacts Ca(2+). At 917-929 (ENQSLLRMPPWEN) the chain is on the cytoplasmic side. A helical transmembrane segment spans residues 930-948 (IWLVGSICLSMSLHFLILY). An interaction with PLN region spans residues 931-942 (WLVGSICLSMSL). Residues 949–963 (VEPLPLIFQITPLNV) are Lumenal-facing. Residues 964 to 984 (TQWLMVLKISLPVILMDETLK) form a helical membrane-spanning segment. The Cytoplasmic portion of the chain corresponds to 985-1042 (FVARNYLEPGKECVQPAPQSCSLWACTEGVSWPFVLLIVPLVMWVYSTDTNFSDLLWS).

This sequence belongs to the cation transport ATPase (P-type) (TC 3.A.3) family. Type IIA subfamily. Interacts with sarcolipin (SLN); the interaction inhibits ATP2A2 Ca(2+) affinity. Interacts with phospholamban (PLN); the interaction inhibits ATP2A2 Ca(2+) affinity. Interacts with myoregulin (MRLN). Interacts with ARLN and ERLN; the interactions inhibit ATP2A2 Ca(2+) affinity. Interacts with SRTIT1/DWORF; the interaction results in activation of ATP2A2. Interacts with the monomeric forms of SLN, PLN, ARLN, ERLN and STRI1/DWORF. Interacts with HAX1. Interacts with S100A8 and S100A9. Interacts with SLC35G1 and STIM1. Interacts with TMEM203. Interacts with TMEM64 and PDIA3. Interacts with TMX1. Interacts with TMX2. Interacts with VMP1; VMP1 competes with PLN and SLN to prevent them from forming an inhibitory complex with ATP2A2. Interacts with ULK1. Interacts with TUNAR. Interacts with FLVCR2; this interaction occurs in the absence of heme and promotes ATP2A2 proteasomal degradation; this complex is dissociated upon heme binding. Interacts with FNIP1. As to quaternary structure, interacts with TRAM2 (via C-terminus). Mg(2+) is required as a cofactor. Nitrated under oxidative stress. Nitration on the two tyrosine residues inhibits catalytic activity. In terms of processing, serotonylated on Gln residues by TGM2 in response to hypoxia, leading to its inactivation. In terms of tissue distribution, isoform 2 is highly expressed in heart and slow twitch skeletal muscle. Isoform 1 is widely expressed.

The protein resides in the endoplasmic reticulum membrane. Its subcellular location is the sarcoplasmic reticulum membrane. It catalyses the reaction Ca(2+)(in) + ATP + H2O = Ca(2+)(out) + ADP + phosphate + H(+). Has different conformational states with differential Ca2+ affinity. The E1 conformational state (active form) shows high Ca(2+) affinity, while the E2 state exhibits low Ca(2+) affinity. Binding of ATP allosterically increases its affinity for subsequent binding of Ca2+. Reversibly inhibited by phospholamban (PLN) at low calcium concentrations. PLN inhibits ATP2A2 Ca(2+) affinity by disrupting its allosteric activation by ATP. Inhibited by sarcolipin (SLN) and myoregulin (MRLN). The inhibition is blocked by VMP1. Enhanced by STRIT1/DWORF; STRIT1 increases activity by displacing sarcolipin (SLN), phospholamban (PLN) and myoregulin (MRLN). Stabilizes SERCA2 in its E2 state. In terms of biological role, this magnesium-dependent enzyme catalyzes the hydrolysis of ATP coupled with the translocation of calcium from the cytosol to the sarcoplasmic reticulum lumen. Involved in autophagy in response to starvation. Upon interaction with VMP1 and activation, controls ER-isolation membrane contacts for autophagosome formation. Also modulates ER contacts with lipid droplets, mitochondria and endosomes. In coordination with FLVCR2 mediates heme-stimulated switching from mitochondrial ATP synthesis to thermogenesis. Functionally, involved in the regulation of the contraction/relaxation cycle. Acts as a regulator of TNFSF11-mediated Ca(2+) signaling pathways via its interaction with TMEM64 which is critical for the TNFSF11-induced CREB1 activation and mitochondrial ROS generation necessary for proper osteoclast generation. Association between TMEM64 and SERCA2 in the ER leads to cytosolic Ca(2+) spiking for activation of NFATC1 and production of mitochondrial ROS, thereby triggering Ca(2+) signaling cascades that promote osteoclast differentiation and activation. The sequence is that of Sarcoplasmic/endoplasmic reticulum calcium ATPase 2 (ATP2A2) from Oryctolagus cuniculus (Rabbit).